A 123-amino-acid chain; its full sequence is Small ribosomal subunit protein uS13 (123 aa).

The segment at 92 to 123 is disordered; sequence RKGLPVRGQKTKTNARTRKGPKKLVGAKKKSK.

It belongs to the universal ribosomal protein uS13 family. Part of the 30S ribosomal subunit. Forms a loose heterodimer with protein S19. Forms two bridges to the 50S subunit in the 70S ribosome.

Its function is as follows. Located at the top of the head of the 30S subunit, it contacts several helices of the 16S rRNA. In the 70S ribosome it contacts the 23S rRNA (bridge B1a) and protein L5 of the 50S subunit (bridge B1b), connecting the 2 subunits; these bridges are implicated in subunit movement. Contacts the tRNAs in the A and P-sites. This Clostridium kluyveri (strain NBRC 12016) protein is Small ribosomal subunit protein uS13.